Consider the following 79-residue polypeptide: Protein S100-G (79 aa).

Ser-2 bears the N-acetylserine mark. EF-hand domains are found at residues 13–48 (IFEK…KGPN) and 45–79 (KGPN…KISQ). Residues Gln-26 and Glu-31 each coordinate Ca(2+). Residue Ser-42 is modified to Phosphoserine. Positions 58, 60, 62, 64, and 69 each coordinate Ca(2+).

Belongs to the S-100 family.

This is Protein S100-G (S100G) from Homo sapiens (Human).